Reading from the N-terminus, the 1738-residue chain is Complement C4-B (1738 aa).

Residues 1–19 (MRLLWGLAWVFSFCASSLQ) form the signal peptide. An intrachain disulfide couples cysteine 66 to cysteine 95. A glycan (N-linked (GlcNAc...) asparagine) is linked at asparagine 224. The cysteines at positions 633 and 667 are disulfide-linked. Positions 674 to 677 (RQKR) are excised as a propeptide. 3 cysteine pairs are disulfide-bonded: cysteine 700/cysteine 726, cysteine 701/cysteine 733, and cysteine 714/cysteine 734. Residues 700 to 734 (CCQDGMTKLPMKRTCEQRAARVPQQACREPFLSCC) form the Anaphylatoxin-like domain. A glycan (N-linked (GlcNAc...) asparagine) is linked at asparagine 743. Positions 1006–1009 (CAEQ) form a cross-link, isoglutamyl cysteine thioester (Cys-Gln). Residues asparagine 1324 and asparagine 1387 are each glycosylated (N-linked (GlcNAc...) asparagine). Residues tyrosine 1413, tyrosine 1416, and tyrosine 1417 each carry the sulfotyrosine modification. A propeptide spanning residues 1444–1447 (RRRR) is cleaved from the precursor. Intrachain disulfides connect cysteine 1465–cysteine 1529, cysteine 1577–cysteine 1582, cysteine 1589–cysteine 1667, cysteine 1612–cysteine 1736, and cysteine 1712–cysteine 1721. The NTR domain maps to 1589-1736 (CPRLLRSLER…FLMEFSSRGC (148 aa)).

As to quaternary structure, in absence of complement activation, circulates in blood as a disulfide-linked trimer of an alpha, beta and gamma chain. Complement C4b is composed of complement C4b-A, complement C4 beta and complement C4 gamma chains that are associated via disulfide bonds. Non-enzymatic component of the C3 convertase, also named C4bC2b, composed of the serine protease complement C2b (C2), as well as complement C4b. Non-enzymatic component of the C5 convertase, also named C4bC2bC3b, composed of the serine protease complement C2b (C2), complement C3b, as well as complement C4b. Post-translationally, prior to secretion, the single-chain precursor is enzymatically cleaved by plasminogen (PLG) to yield non-identical chains alpha, beta and gamma. During activation of the complement systems, the alpha chain is cleaved into C4a and C4b by different proteases depending on the complement pathway: C4b stays linked to the beta and gamma chains, while C4a is released in the plasma. The alpha chain is cleaved by C1S to generate C4a and C4b following activation by the classical complement system. The alpha chain is cleaved to generate C4a and C4b by MASP2 following activation by the lectin complement system. The alpha chain is cleaved by GZMK to generate C4a and C4b following activation by the GZMK complement system. Further degradation of C4b by C1 into the inactive fragments C4c and C4d blocks the generation of C3 convertase. The proteolytic cleavages often are incomplete so that many structural forms can be found in plasma. Upon activation, the internal thioester bond reacts with carbohydrate antigens on the target surface to form amide or ester bonds, leading to covalent association with the surface of pathogens. In terms of processing, complement C4b interacts with complement C3b via a thioester linkage.

The protein localises to the secreted. The protein resides in the cell surface. Its function is as follows. Precursor of non-enzymatic components of the classical, lectin and GZMK complement pathways, which consist in a cascade of proteins that leads to phagocytosis and breakdown of pathogens and signaling that strengthens the adaptive immune system. Functionally, non-enzymatic component of C3 and C5 convertases. Generated following cleavage by complement proteases (C1S, MASP2 or GZMK, depending on the complement pathway), it covalently attaches to the surface of pathogens, where it acts as an opsonin that marks the surface of antigens for removal. It then recruits the serine protease complement C2b to form the C3 and C5 convertases, which cleave and activate C3 and C5, respectively, the next components of the complement pathways. Complement C4b-A isotype is responsible for effective binding to form amide bonds with immune aggregates or protein antigens, while complement C4b-B isotype catalyzes the transacylation of the thioester carbonyl group to form ester bonds with carbohydrate antigens. Putative humoral mediator released following cleavage by complement proteases (C1S, MASP2 or GZMK, depending on the complement pathway). While it is strongly similar to anaphylatoxins, its role is unclear. Was reported to act as a mediator of local inflammatory process; however these effects were probably due to contamination with C3a and/C5a anaphylatoxins in biological assays. This chain is Complement C4-B, found in Mus musculus (Mouse).